Reading from the N-terminus, the 265-residue chain is Capsule polysaccharide export inner-membrane protein CtrC (265 aa).

6 consecutive transmembrane segments (helical) span residues Ile-37–Trp-57, Asn-64–Trp-84, Ile-121–Ile-141, Ile-147–Val-167, Phe-178–Phe-198, and Asn-236–Ala-256. Residues Ile-37 to Phe-258 enclose the ABC transmembrane type-2 domain.

The protein belongs to the ABC-2 integral membrane protein family.

It localises to the cell inner membrane. In terms of biological role, may form an ATP-driven capsule polysaccharide export apparatus, in association with the CtrB and CtrD proteins. The polypeptide is Capsule polysaccharide export inner-membrane protein CtrC (ctrC) (Neisseria meningitidis serogroup A / serotype 4A (strain DSM 15465 / Z2491)).